The primary structure comprises 58 residues: uncharacterized protein (58 aa).

This is an uncharacterized protein from Methanocaldococcus jannaschii (strain ATCC 43067 / DSM 2661 / JAL-1 / JCM 10045 / NBRC 100440) (Methanococcus jannaschii).